A 331-amino-acid polypeptide reads, in one-letter code: Proline-rich protein 33 (331 aa).

Disordered regions lie at residues 1-112 (MGPQ…SVPR), 128-185 (SLES…PKVA), and 204-247 (APEP…APAS). Positions 94 to 105 (PEEPPVPRPPPG) are enriched in pro residues. Residues 149 to 169 (PPMAGPAAEAERVSSPAWASS) show a composition bias toward low complexity. Pro residues predominate over residues 170 to 185 (PTPPSGPHPCPVPKVA). The segment covering 217-238 (EPEVPTPTEQEVPAPTEQEVPA) has biased composition (low complexity).

The sequence is that of Proline-rich protein 33 (PRR33) from Homo sapiens (Human).